A 153-amino-acid polypeptide reads, in one-letter code: Bkd operon transcriptional regulator (153 aa).

An HTH asnC-type domain is found at 4–65; that stretch reads LDRIDLKILR…RLDEERLSGA (62 aa). The segment at residues 23-42 is a DNA-binding region (H-T-H motif); the sequence is WRDLAQKVGLSLTPTLRRVR.

Positive regulator of the bkd operon for branched-chain keto acid dehydrogenase complex. The polypeptide is Bkd operon transcriptional regulator (bkdR) (Pseudomonas aeruginosa (strain ATCC 15692 / DSM 22644 / CIP 104116 / JCM 14847 / LMG 12228 / 1C / PRS 101 / PAO1)).